The sequence spans 159 residues: 2-C-methyl-D-erythritol 2,4-cyclodiphosphate synthase (159 aa).

Aspartate 10 and histidine 12 together coordinate a divalent metal cation. 4-CDP-2-C-methyl-D-erythritol 2-phosphate contacts are provided by residues 10-12 (DVH) and 37-38 (HS). Residue histidine 45 participates in a divalent metal cation binding. 4-CDP-2-C-methyl-D-erythritol 2-phosphate is bound by residues 59–61 (DIG), 64–68 (FPDTD), 103–109 (AQAPKML), 135–138 (TTTE), phenylalanine 142, and arginine 145.

This sequence belongs to the IspF family. Homotrimer. The cofactor is a divalent metal cation.

The enzyme catalyses 4-CDP-2-C-methyl-D-erythritol 2-phosphate = 2-C-methyl-D-erythritol 2,4-cyclic diphosphate + CMP. It participates in isoprenoid biosynthesis; isopentenyl diphosphate biosynthesis via DXP pathway; isopentenyl diphosphate from 1-deoxy-D-xylulose 5-phosphate: step 4/6. Functionally, involved in the biosynthesis of isopentenyl diphosphate (IPP) and dimethylallyl diphosphate (DMAPP), two major building blocks of isoprenoid compounds. Catalyzes the conversion of 4-diphosphocytidyl-2-C-methyl-D-erythritol 2-phosphate (CDP-ME2P) to 2-C-methyl-D-erythritol 2,4-cyclodiphosphate (ME-CPP) with a corresponding release of cytidine 5-monophosphate (CMP). The sequence is that of 2-C-methyl-D-erythritol 2,4-cyclodiphosphate synthase from Francisella tularensis subsp. novicida (strain U112).